A 173-amino-acid polypeptide reads, in one-letter code: NADH-ubiquinone oxidoreductase chain 6 (173 aa).

The next 5 helical transmembrane spans lie at 1-21 (MTYF…AVAS), 27-47 (YGVV…LSLG), 48-68 (VSFV…VVFV), 91-111 (GVGF…IGCL), and 141-161 (VGMF…VLEL).

Belongs to the complex I subunit 6 family.

It localises to the mitochondrion membrane. The catalysed reaction is a ubiquinone + NADH + 5 H(+)(in) = a ubiquinol + NAD(+) + 4 H(+)(out). Its function is as follows. Core subunit of the mitochondrial membrane respiratory chain NADH dehydrogenase (Complex I) that is believed to belong to the minimal assembly required for catalysis. Complex I functions in the transfer of electrons from NADH to the respiratory chain. The immediate electron acceptor for the enzyme is believed to be ubiquinone. In Fratercula arctica (Atlantic puffin), this protein is NADH-ubiquinone oxidoreductase chain 6 (MT-ND6).